The sequence spans 296 residues: Acetylglutamate kinase (296 aa).

Residues 71–72, arginine 93, and asparagine 186 contribute to the substrate site; that span reads GG.

It belongs to the acetylglutamate kinase family. ArgB subfamily.

The protein localises to the cytoplasm. It catalyses the reaction N-acetyl-L-glutamate + ATP = N-acetyl-L-glutamyl 5-phosphate + ADP. The protein operates within amino-acid biosynthesis; L-arginine biosynthesis; N(2)-acetyl-L-ornithine from L-glutamate: step 2/4. In terms of biological role, catalyzes the ATP-dependent phosphorylation of N-acetyl-L-glutamate. The sequence is that of Acetylglutamate kinase from Synechococcus sp. (strain RCC307).